Here is a 510-residue protein sequence, read N- to C-terminus: tRNA-2-methylthio-N(6)-dimethylallyladenosine synthase (510 aa).

The region spanning 19 to 135 (RTFEVRTYGC…LPALLDRARH (117 aa)) is the MTTase N-terminal domain. [4Fe-4S] cluster-binding residues include cysteine 28, cysteine 64, cysteine 98, cysteine 172, cysteine 176, and cysteine 179. The Radical SAM core domain occupies 158–394 (RESSYAAWVS…IELQERISLE (237 aa)). The region spanning 397-467 (TAQIGRRVEL…PHHLIADAGL (71 aa)) is the TRAM domain. The disordered stretch occupies residues 477-510 (DAHAAGQKPRTGVGLGMPAVGAPDPLPATTGCAR).

It belongs to the methylthiotransferase family. MiaB subfamily. Monomer. It depends on [4Fe-4S] cluster as a cofactor.

The protein resides in the cytoplasm. It catalyses the reaction N(6)-dimethylallyladenosine(37) in tRNA + (sulfur carrier)-SH + AH2 + 2 S-adenosyl-L-methionine = 2-methylsulfanyl-N(6)-dimethylallyladenosine(37) in tRNA + (sulfur carrier)-H + 5'-deoxyadenosine + L-methionine + A + S-adenosyl-L-homocysteine + 2 H(+). Functionally, catalyzes the methylthiolation of N6-(dimethylallyl)adenosine (i(6)A), leading to the formation of 2-methylthio-N6-(dimethylallyl)adenosine (ms(2)i(6)A) at position 37 in tRNAs that read codons beginning with uridine. The chain is tRNA-2-methylthio-N(6)-dimethylallyladenosine synthase from Mycolicibacterium vanbaalenii (strain DSM 7251 / JCM 13017 / BCRC 16820 / KCTC 9966 / NRRL B-24157 / PYR-1) (Mycobacterium vanbaalenii).